The sequence spans 545 residues: Lysine--tRNA ligase (545 aa).

Positions P42–H50 match the 'HIGH' region motif. Residues P307–S311 carry the 'KMSKS' region motif.

It belongs to the class-I aminoacyl-tRNA synthetase family.

The protein resides in the cytoplasm. The catalysed reaction is tRNA(Lys) + L-lysine + ATP = L-lysyl-tRNA(Lys) + AMP + diphosphate. This chain is Lysine--tRNA ligase, found in Haloarcula marismortui (strain ATCC 43049 / DSM 3752 / JCM 8966 / VKM B-1809) (Halobacterium marismortui).